Reading from the N-terminus, the 193-residue chain is Adenine phosphoribosyltransferase (193 aa).

It belongs to the purine/pyrimidine phosphoribosyltransferase family. In terms of assembly, homodimer.

The protein resides in the cytoplasm. It carries out the reaction AMP + diphosphate = 5-phospho-alpha-D-ribose 1-diphosphate + adenine. It functions in the pathway purine metabolism; AMP biosynthesis via salvage pathway; AMP from adenine: step 1/1. Functionally, catalyzes a salvage reaction resulting in the formation of AMP, that is energically less costly than de novo synthesis. The sequence is that of Adenine phosphoribosyltransferase from Bifidobacterium animalis subsp. lactis (strain AD011).